The primary structure comprises 688 residues: PTS system glucoside-specific EIICBA component (688 aa).

One can recognise a PTS EIIC type-1 domain in the interval 3–427 (KKLFGQLQRI…FKLKTPGRED (425 aa)). The next 10 membrane-spanning stretches (helical) occupy residues 12–32 (IGKA…LLAF), 81–101 (LGLA…YLIM), 137–157 (LVLG…MGAL), 182–202 (FVPI…SFAW), 223–243 (LTTF…LHHI), 284–304 (AFTT…AFAI), 315–335 (VVGG…ITEP), 340–360 (FLFV…TSFL), 364–384 (LLGV…ILYG), and 395–415 (LVIP…DFAI). The PTS EIIB type-1 domain maps to 438-519 (AKLPFDVLDA…AKIMSGEITK (82 aa)). Residue cysteine 460 is the Phosphocysteine intermediate; for EIIB activity of the active site. The region spanning 560-664 (DQVFAGKMMG…SIVTPMIITN (105 aa)) is the PTS EIIA type-1 domain. The active-site Tele-phosphohistidine intermediate; for EIIA activity is the histidine 612.

It is found in the cell membrane. Its function is as follows. The phosphoenolpyruvate-dependent sugar phosphotransferase system (sugar PTS), a major carbohydrate active -transport system, catalyzes the phosphorylation of incoming sugar substrates concomitantly with their translocation across the cell membrane. This system is involved in alpha- and beta-glucoside transport. The chain is PTS system glucoside-specific EIICBA component (glcB) from Staphylococcus aureus (strain bovine RF122 / ET3-1).